The following is a 98-amino-acid chain: MSLTYMNMFMAFTISLLGLLMYRSHMMSSLLCLEGMMLSLFVMMTITILNTHLTLASMLPIILLVFAACEAALGLSLLVMVSTTYGMDYVQNLNLLQC.

Helical transmembrane passes span 1-21 (MSLT…GLLM), 29-49 (SLLC…ITIL), and 61-81 (IILL…LVMV).

It belongs to the complex I subunit 4L family. In terms of assembly, core subunit of respiratory chain NADH dehydrogenase (Complex I) which is composed of 45 different subunits.

Its subcellular location is the mitochondrion inner membrane. The catalysed reaction is a ubiquinone + NADH + 5 H(+)(in) = a ubiquinol + NAD(+) + 4 H(+)(out). Core subunit of the mitochondrial membrane respiratory chain NADH dehydrogenase (Complex I) which catalyzes electron transfer from NADH through the respiratory chain, using ubiquinone as an electron acceptor. Part of the enzyme membrane arm which is embedded in the lipid bilayer and involved in proton translocation. The sequence is that of NADH-ubiquinone oxidoreductase chain 4L (MT-ND4L) from Artibeus jamaicensis (Jamaican fruit-eating bat).